Reading from the N-terminus, the 317-residue chain is Anamorsin homolog (317 aa).

The interval 1 to 192 is N-terminal SAM-like domain; it reads MREVLVVSES…ITGVRPNWKA (192 aa). Residues 193–216 are linker; that stretch reads KGDRKSSSIHAAPIDGYISKAPDY. Residues C219, C226, C229, and C231 each coordinate [2Fe-2S] cluster. The segment at 219–231 is fe-S binding site A; sequence CSTKPRACANCTC. Residues C286, C289, C297, and C300 each coordinate [4Fe-4S] cluster. 2 short sequence motifs (cx2C motif) span residues 286–289 and 297–300; these read CGNC and CDSC. A fe-S binding site B region spans residues 286 to 300; that stretch reads CGNCYLGDAFRCDSC.

The protein belongs to the anamorsin family. As to quaternary structure, monomer. Requires [2Fe-2S] cluster as cofactor. It depends on [4Fe-4S] cluster as a cofactor.

The protein resides in the cytoplasm. It localises to the mitochondrion intermembrane space. Component of the cytosolic iron-sulfur (Fe-S) protein assembly (CIA) machinery. Required for the maturation of extramitochondrial Fe-S proteins. Part of an electron transfer chain functioning in an early step of cytosolic Fe-S biogenesis, facilitating the de novo assembly of a [4Fe-4S] cluster on the cytosolic Fe-S scaffold complex. Electrons are transferred from NADPH via a FAD- and FMN-containing diflavin oxidoreductase. Together with the diflavin oxidoreductase, also required for the assembly of the diferric tyrosyl radical cofactor of ribonucleotide reductase (RNR), probably by providing electrons for reduction during radical cofactor maturation in the catalytic small subunit. In Theileria parva (East coast fever infection agent), this protein is Anamorsin homolog.